We begin with the raw amino-acid sequence, 142 residues long: Small ribosomal subunit protein uS19 (142 aa).

This sequence belongs to the universal ribosomal protein uS19 family. In terms of assembly, component of the small ribosomal subunit. Mature ribosomes consist of a small (40S) and a large (60S) subunit. The 40S subunit contains about 32 different proteins and 1 molecule of RNA (18S). The 60S subunit contains 45 different proteins and 3 molecules of RNA (25S, 5.8S and 5S).

Its subcellular location is the cytoplasm. Component of the ribosome, a large ribonucleoprotein complex responsible for the synthesis of proteins in the cell. The small ribosomal subunit (SSU) binds messenger RNAs (mRNAs) and translates the encoded message by selecting cognate aminoacyl-transfer RNA (tRNA) molecules. The large subunit (LSU) contains the ribosomal catalytic site termed the peptidyl transferase center (PTC), which catalyzes the formation of peptide bonds, thereby polymerizing the amino acids delivered by tRNAs into a polypeptide chain. The nascent polypeptides leave the ribosome through a tunnel in the LSU and interact with protein factors that function in enzymatic processing, targeting, and the membrane insertion of nascent chains at the exit of the ribosomal tunnel. RPS15 has a role in the late stage of the assembly of pre-40S particles within the nucleus and controls their export to the cytoplasm. The chain is Small ribosomal subunit protein uS19 (RPS15) from Candida albicans (strain SC5314 / ATCC MYA-2876) (Yeast).